The following is a 243-amino-acid chain: Vesicle-associated membrane protein-associated protein B (243 aa).

N-acetylalanine is present on Ala2. The Cytoplasmic portion of the chain corresponds to 2–218 (AKVEQVLSLE…AALAASGKEE (217 aa)). The MSP domain occupies 7–124 (VLSLEPQHEL…MDSKLRCVFE (118 aa)). Phosphoserine is present on Ser146. A Glycyl lysine isopeptide (Lys-Gly) (interchain with G-Cter in SUMO1) cross-link involves residue Lys147. Phosphoserine is present on Ser159. Residues 161–196 (LDDAEVKKVMEECRRLQGEVQRLREESRQLKEEDGL) are a coiled coil. Ser206 carries the post-translational modification Phosphoserine. The chain crosses the membrane as a helical; Anchor for type IV membrane protein span at residues 219–239 (GLSARLLALVVLFFIVGVIIG).

Belongs to the VAMP-associated protein (VAP) (TC 9.B.17) family. In terms of assembly, homodimer, and heterodimer with VAPA. Interacts with VAMP1 and VAMP2. Interacts (via MSP domain) with ZFYVE27. Interacts with RMDN3. Interacts with KIF5A in a ZFYVE27-dependent manner. Interacts (via MSP domain) with STARD3 (via phospho-FFAT motif). Interacts with STARD3NL (via FFAT motif). Interacts with CERT1. Interacts with PLEKHA3 and SACM1L to form a ternary complex. Interacts with VPS13A (via FFAT motif). Interacts with RB1CC1 (via phosphorylated FFAT motif), MIGA2 (via phosphorylated FFAT motif), RMDN3 (via phosphorylated FFAT motif), OSBPL1A (via FFAT motif), KCNB1 (via phosphorylated FFAT motif) and KCNB2 (via phosphorylated FFAT motif). Interacts (via MSP domain) with WDR44; the interactions connect the endoplasmic reticulum (ER) with the endosomal tubule. In terms of tissue distribution, ubiquitous.

Its subcellular location is the endoplasmic reticulum membrane. In terms of biological role, endoplasmic reticulum (ER)-anchored protein that mediates the formation of contact sites between the ER and endosomes via interaction with FFAT motif-containing proteins such as STARD3 or WDR44. Interacts with STARD3 in a FFAT motif phosphorylation dependent manner. Via interaction with WDR44 participates in neosynthesized protein export. Participates in the endoplasmic reticulum unfolded protein response (UPR) by inducing ERN1/IRE1 activity. Involved in cellular calcium homeostasis regulation. The protein is Vesicle-associated membrane protein-associated protein B of Rattus norvegicus (Rat).